Here is a 543-residue protein sequence, read N- to C-terminus: Malate synthase (543 aa).

The active-site Proton acceptor is Arg-162. Catalysis depends on Asp-449, which acts as the Proton donor.

It belongs to the malate synthase family.

It carries out the reaction glyoxylate + acetyl-CoA + H2O = (S)-malate + CoA + H(+). It participates in carbohydrate metabolism; glyoxylate cycle; (S)-malate from isocitrate: step 2/2. This is Malate synthase (masA) from Dictyostelium discoideum (Social amoeba).